The chain runs to 2217 residues: Protein irg-7 (2217 aa).

An N-terminal signal peptide occupies residues 1–16 (MRNWVLIAALAVICLA). EGF-like domains lie at 370–405 (SGST…FHCQ) and 864–896 (TGTY…ESCE). Intrachain disulfides connect C379–C393, C395–C404, C868–C873, C886–C895, C1212–C1312, C1285–C1304, C1508–C1521, and C1523–C1532. The C-type lectin domain maps to 1188-1313 (IGQYCIKFMA…CAEPRAFACQ (126 aa)). The region spanning 1499-1533 (TGSRCTVPICVNGGTRNPDEATCSCPDGYEGPNCQ) is the EGF-like 3 domain. One can recognise a VWFA domain in the interval 2016–2202 (DVVFMIDGSQ…NNQIKTIQQL (187 aa)).

The protein localises to the secreted. In terms of biological role, plays a role in innate immunity, probably via the atf-7 pathway, to confer resistance to pathogenic bacteria. May also play a role in the regulation of longevity. The sequence is that of Protein irg-7 from Caenorhabditis elegans.